Consider the following 445-residue polypeptide: TNF receptor-associated factor family protein DDB_G0290971 (445 aa).

Residues 23–67 (CPICFDLYYSSSSKKEVFQCRDGHLACKSCWSDSLLNKKECMICR) form an RING-type; degenerate zinc finger. 2 consecutive TRAF-type zinc fingers follow at residues 133-186 (KHQV…QLDA) and 186-242 (AHAL…ESID). A coiled-coil region spans residues 269–307 (QLELVECKNQIYQINNKYEKLLERVIKLEQLSMDASNKL). Residues 314 to 441 (KNSIIFATFS…EDKLVIGLRI (128 aa)) enclose the MATH domain.

Belongs to the TNF receptor-associated factor family. A subfamily.

It is found in the cytoplasm. Probable adapter protein and signal transducer that links members of the tumor necrosis factor receptor family to different signaling pathways by association with the receptor cytoplasmic domain and kinases. The sequence is that of TNF receptor-associated factor family protein DDB_G0290971 from Dictyostelium discoideum (Social amoeba).